Consider the following 225-residue polypeptide: MQLVTAAEMQTIDNYTVETIGMPQDVLIERAAMSVIDVIGAGHFNLDHILVLAGLGNNGADGVAISRLLYAQGFNVSLQFVGNVTRAKDSVKRQLDIIEKYGLVRAEKSDFNEATLIIDAIFGTGLNNLLPEGLQKMIKAANHIEKTVIAVDTPTGIDATTGEVRGAALKAHTTVTFGYNKIGLTQRVGGYLSGNVIVKDIGLLTPQDFNFSLPDKENSPSVATS.

The region spanning 9–209 (MQTIDNYTVE…DIGLLTPQDF (201 aa)) is the YjeF N-terminal domain. Residue 57–61 (NNGAD) participates in (6S)-NADPHX binding. Asparagine 58 and aspartate 119 together coordinate K(+). (6S)-NADPHX-binding positions include 123 to 129 (GTGLNNL) and aspartate 152. Threonine 155 is a K(+) binding site.

This sequence belongs to the NnrE/AIBP family. K(+) is required as a cofactor.

It catalyses the reaction (6R)-NADHX = (6S)-NADHX. The catalysed reaction is (6R)-NADPHX = (6S)-NADPHX. Catalyzes the epimerization of the S- and R-forms of NAD(P)HX, a damaged form of NAD(P)H that is a result of enzymatic or heat-dependent hydration. This is a prerequisite for the S-specific NAD(P)H-hydrate dehydratase to allow the repair of both epimers of NAD(P)HX. This Leuconostoc kimchii (strain IMSNU 11154 / KCTC 2386 / IH25) protein is NAD(P)H-hydrate epimerase.